Consider the following 472-residue polypeptide: Adenosylhomocysteinase (472 aa).

Substrate contacts are provided by Thr-63, Asp-138, and Glu-198. 199–201 (TTT) is a binding site for NAD(+). Lys-228 and Asp-232 together coordinate substrate. Residues Asn-233, 262-267 (GYGDVG), Glu-285, Asn-320, 341-343 (IGH), and Asn-386 each bind NAD(+).

Belongs to the adenosylhomocysteinase family. Requires NAD(+) as cofactor.

The protein localises to the cytoplasm. The catalysed reaction is S-adenosyl-L-homocysteine + H2O = L-homocysteine + adenosine. It participates in amino-acid biosynthesis; L-homocysteine biosynthesis; L-homocysteine from S-adenosyl-L-homocysteine: step 1/1. Functionally, may play a key role in the regulation of the intracellular concentration of adenosylhomocysteine. This is Adenosylhomocysteinase from Methylococcus capsulatus (strain ATCC 33009 / NCIMB 11132 / Bath).